Consider the following 472-residue polypeptide: Adenosylhomocysteinase (472 aa).

The substrate site is built by Thr-64, Asp-138, and Glu-198. Residue 199–201 (TTT) participates in NAD(+) binding. Substrate-binding residues include Lys-228 and Asp-232. NAD(+) contacts are provided by residues Asn-233, 262–267 (GFGDVG), Glu-285, Asn-320, 341–343 (IGH), and Asn-386.

This sequence belongs to the adenosylhomocysteinase family. The cofactor is NAD(+).

It localises to the cytoplasm. It carries out the reaction S-adenosyl-L-homocysteine + H2O = L-homocysteine + adenosine. It functions in the pathway amino-acid biosynthesis; L-homocysteine biosynthesis; L-homocysteine from S-adenosyl-L-homocysteine: step 1/1. Its function is as follows. May play a key role in the regulation of the intracellular concentration of adenosylhomocysteine. The sequence is that of Adenosylhomocysteinase from Prochlorococcus marinus (strain MIT 9312).